The sequence spans 336 residues: tRNA N6-adenosine threonylcarbamoyltransferase (336 aa).

Positions 108 and 112 each coordinate Fe cation. Substrate-binding positions include 129–133 (LISGG), D161, E178, and S258. A Fe cation-binding site is contributed by D286.

This sequence belongs to the KAE1 / TsaD family. It depends on Fe(2+) as a cofactor.

The protein localises to the cytoplasm. The catalysed reaction is L-threonylcarbamoyladenylate + adenosine(37) in tRNA = N(6)-L-threonylcarbamoyladenosine(37) in tRNA + AMP + H(+). Functionally, required for the formation of a threonylcarbamoyl group on adenosine at position 37 (t(6)A37) in tRNAs that read codons beginning with adenine. Is probably involved in the transfer of the threonylcarbamoyl moiety of threonylcarbamoyl-AMP (TC-AMP) to the N6 group of A37. In Pyrobaculum neutrophilum (strain DSM 2338 / JCM 9278 / NBRC 100436 / V24Sta) (Thermoproteus neutrophilus), this protein is tRNA N6-adenosine threonylcarbamoyltransferase.